Reading from the N-terminus, the 147-residue chain is Small ribosomal subunit protein uS9 (147 aa).

The segment at 128–147 (KERKKYGQMGARAKYRWSKR) is disordered.

The protein belongs to the universal ribosomal protein uS9 family.

The polypeptide is Small ribosomal subunit protein uS9 (rpsI) (Aquifex aeolicus (strain VF5)).